Reading from the N-terminus, the 185-residue chain is uncharacterized protein (185 aa).

This is an uncharacterized protein from Alkalihalophilus pseudofirmus (strain ATCC BAA-2126 / JCM 17055 / OF4) (Bacillus pseudofirmus).